The following is a 541-amino-acid chain: 2-hydroxyacylsphingosine 1-beta-galactosyltransferase (541 aa).

An N-terminal signal peptide occupies residues 1–20; that stretch reads MKSYTPYFMLLWSAVGIARA. Residues Asn78, Asn333, and Asn442 are each glycosylated (N-linked (GlcNAc...) asparagine). Residues 472–492 form a helical membrane-spanning segment; that stretch reads YFLLDIAFVLLLGAVALYFIV.

This sequence belongs to the UDP-glycosyltransferase family. In terms of tissue distribution, brain, restricted to the oligodendrocyte-containing cell layers of cerebrum and cerebellum.

The protein localises to the membrane. Its subcellular location is the endoplasmic reticulum. The enzyme catalyses an N-acylsphing-4-enine + UDP-alpha-D-galactose = a beta-D-galactosyl-(1&lt;-&gt;1')-N-acylsphing-4-enine + UDP + H(+). The catalysed reaction is N-(2-hydroxy-hexanoyl)-sphing-4-enine + UDP-alpha-D-galactose = N-(2-hydroxy-hexanoyl)-beta-D-galactosyl-sphing-4-enine + UDP + H(+). It catalyses the reaction N-(2-hydroxy-hexanoyl)-sphinganine + UDP-alpha-D-galactose = N-(2-hydroxyhexanoyl)-beta-D-galactosylsphinganine + UDP + H(+). It carries out the reaction an N-acyl-sphingoid base + UDP-alpha-D-galactose = a D-galactosylceramide + UDP + H(+). The protein operates within sphingolipid metabolism; galactosylceramide biosynthesis. Functionally, catalyzes the transfer of galactose to ceramide, a key enzymatic step in the biosynthesis of galactocerebrosides, which are abundant sphingolipids of the myelin membrane of the central nervous system and peripheral nervous system. Galactosylates both hydroxy- and non-hydroxy fatty acid-containing ceramides and diglycerides. In Rattus norvegicus (Rat), this protein is 2-hydroxyacylsphingosine 1-beta-galactosyltransferase.